A 311-amino-acid chain; its full sequence is 33 kDa chaperonin (311 aa).

2 cysteine pairs are disulfide-bonded: Cys240-Cys242 and Cys273-Cys276.

The protein belongs to the HSP33 family. Under oxidizing conditions two disulfide bonds are formed involving the reactive cysteines. Under reducing conditions zinc is bound to the reactive cysteines and the protein is inactive.

The protein resides in the cytoplasm. Redox regulated molecular chaperone. Protects both thermally unfolding and oxidatively damaged proteins from irreversible aggregation. Plays an important role in the bacterial defense system toward oxidative stress. This is 33 kDa chaperonin from Trichodesmium erythraeum (strain IMS101).